The sequence spans 505 residues: NADH-quinone oxidoreductase subunit N 1 (505 aa).

14 consecutive transmembrane segments (helical) span residues 18–38 (LIPEIALGCLALLLLVVEMVL), 45–65 (LIATIAIIGQFGILGWVAWDF), 84–104 (YVGQAMRVFFLLSSIFVSILA), 116–136 (IEFYHIVLVATAAMMLLAQAN), 138–158 (FVLFFVALETLTVGLYILVSY), 173–193 (LIMGALSSSLLLFGIVLLYGV), 223–243 (FLAAAGIVLVLSGIAFKIGAF), 271–291 (AGFAILLVLVNSVFGPYWWLV), 292–312 (QPVLVAMAVATILFGNIAALT), 319–339 (LIGLSGVSHAGFLLIGIIASH), 345–365 (VGAVLFYLFAYLLATFAVFGV), 391–411 (FLAAILAVALGSLAGIPPLAG), 429–449 (GLLAVAIVGVVISIYYYFGWI), and 473–493 (VGAAAGVALATLALCSILFGV).

Belongs to the complex I subunit 2 family. In terms of assembly, NDH-1 is composed of 14 different subunits. Subunits NuoA, H, J, K, L, M, N constitute the membrane sector of the complex.

It is found in the cell inner membrane. It carries out the reaction a quinone + NADH + 5 H(+)(in) = a quinol + NAD(+) + 4 H(+)(out). Its function is as follows. NDH-1 shuttles electrons from NADH, via FMN and iron-sulfur (Fe-S) centers, to quinones in the respiratory chain. The immediate electron acceptor for the enzyme in this species is believed to be ubiquinone. Couples the redox reaction to proton translocation (for every two electrons transferred, four hydrogen ions are translocated across the cytoplasmic membrane), and thus conserves the redox energy in a proton gradient. This Opitutus terrae (strain DSM 11246 / JCM 15787 / PB90-1) protein is NADH-quinone oxidoreductase subunit N 1.